The primary structure comprises 373 residues: Alpha-ketoglutarate dependent kainoid synthase (373 aa).

Positions 204–320 (TINSKKMFFT…RSSLITFYEP (117 aa)) constitute a Fe2OG dioxygenase domain. The Fe cation site is built by histidine 235, aspartate 237, and histidine 296. Arginine 311 lines the 2-oxoglutarate pocket.

It belongs to the iron/ascorbate-dependent oxidoreductase family. Fe(2+) serves as cofactor.

The enzyme catalyses N-(7'-carboxy-7'-demethylgeranyl)-L-glutamate + 2-oxoglutarate + O2 = isodomoate A + succinate + CO2 + H2O. It catalyses the reaction N-geranyl-L-glutamate + 2-oxoglutarate + O2 = dainate A + succinate + CO2 + H2O. The protein operates within secondary metabolite biosynthesis. Iron/ascorbate-dependent oxidoreductase: part of the gene cluster that mediates the biosynthesis of domoic acid (DA) and derivatives, natural products with neurochemical activity acting as ionotropic glutamate receptor (iGluR) agonists, thus being neurotoxins causing amnesic shellfish poisoning (ASP). Catalyzes the conversion of 7'-N-carboxy-L-geranyl-L-glutamic acid (cNGG) to isodomoic acid-A. Also mediates the conversion of N-geranyl-L-glutamic acid (L-NGG) to dainic acid A. This Pseudo-nitzschia multiseries (Marine planktonic diatom) protein is Alpha-ketoglutarate dependent kainoid synthase.